A 164-amino-acid polypeptide reads, in one-letter code: Probable ribosome biogenesis protein RLP24 (164 aa).

It belongs to the eukaryotic ribosomal protein eL24 family. Associated with nucleolar and cytoplasmic pre-60S particles. At the end of biogenesis it dissociates from cytoplasmic pre-60S particles and is likely to be exchanged for its ribosomal homolog, RPL24.

Its subcellular location is the cytoplasm. It is found in the nucleus. In terms of biological role, involved in the biogenesis of the 60S ribosomal subunit. Ensures the docking of nog1 to pre-60S particles. Activates and recruits ATPase AFG2 to cytoplasmic pre-60S ribosomal particles. This chain is Probable ribosome biogenesis protein RLP24 (rlp24), found in Dictyostelium discoideum (Social amoeba).